The primary structure comprises 242 residues: Ubiquinone biosynthesis O-methyltransferase (242 aa).

Positions 36, 56, 77, and 130 each coordinate S-adenosyl-L-methionine.

This sequence belongs to the methyltransferase superfamily. UbiG/COQ3 family.

It carries out the reaction a 3-demethylubiquinol + S-adenosyl-L-methionine = a ubiquinol + S-adenosyl-L-homocysteine + H(+). The enzyme catalyses a 3-(all-trans-polyprenyl)benzene-1,2-diol + S-adenosyl-L-methionine = a 2-methoxy-6-(all-trans-polyprenyl)phenol + S-adenosyl-L-homocysteine + H(+). It functions in the pathway cofactor biosynthesis; ubiquinone biosynthesis. In terms of biological role, O-methyltransferase that catalyzes the 2 O-methylation steps in the ubiquinone biosynthetic pathway. The sequence is that of Ubiquinone biosynthesis O-methyltransferase from Pasteurella multocida (strain Pm70).